Here is a 320-residue protein sequence, read N- to C-terminus: Cytochrome c biogenesis protein CcsA (320 aa).

A run of 7 helical transmembrane segments spans residues 13–33, 46–66, 73–93, 147–167, 226–246, 259–274, and 289–309; these read ISFS…FLLV, GMIV…IYSG, LYES…VSYL, MVLG…LLVI, IISL…VWAN, ETWA…IYFH, and VASM…LLGI.

This sequence belongs to the CcmF/CycK/Ccl1/NrfE/CcsA family. In terms of assembly, may interact with Ccs1.

The protein localises to the plastid. It is found in the chloroplast thylakoid membrane. Required during biogenesis of c-type cytochromes (cytochrome c6 and cytochrome f) at the step of heme attachment. This Gossypium barbadense (Sea Island cotton) protein is Cytochrome c biogenesis protein CcsA.